A 1040-amino-acid chain; its full sequence is Isoleucine--tRNA ligase (1040 aa).

The 'HIGH' region motif lies at 47–57; that stretch reads PYCSGSIHLGT. The 'KMSKS' region motif lies at 605–609; the sequence is KMSKS. Residue lysine 608 participates in ATP binding.

This sequence belongs to the class-I aminoacyl-tRNA synthetase family. IleS type 2 subfamily. Monomer. Requires Zn(2+) as cofactor.

The protein resides in the cytoplasm. It carries out the reaction tRNA(Ile) + L-isoleucine + ATP = L-isoleucyl-tRNA(Ile) + AMP + diphosphate. Its function is as follows. Catalyzes the attachment of isoleucine to tRNA(Ile). As IleRS can inadvertently accommodate and process structurally similar amino acids such as valine, to avoid such errors it has two additional distinct tRNA(Ile)-dependent editing activities. One activity is designated as 'pretransfer' editing and involves the hydrolysis of activated Val-AMP. The other activity is designated 'posttransfer' editing and involves deacylation of mischarged Val-tRNA(Ile). This chain is Isoleucine--tRNA ligase, found in Methanococcus aeolicus (strain ATCC BAA-1280 / DSM 17508 / OCM 812 / Nankai-3).